Consider the following 137-residue polypeptide: uncharacterized protein (137 aa).

A run of 2 helical transmembrane segments spans residues 36 to 52 and 113 to 129; these read LAPP…PFVL and FYGY…IFCF.

The protein localises to the membrane. This is an uncharacterized protein from Saccharomyces cerevisiae (strain ATCC 204508 / S288c) (Baker's yeast).